Here is a 97-residue protein sequence, read N- to C-terminus: ESAT-6-like protein EsxG (97 aa).

Belongs to the WXG100 family. CFP-10 subfamily. In terms of assembly, forms a tight 1:1 complex with EsxH.

It is found in the secreted. The chain is ESAT-6-like protein EsxG from Mycolicibacterium smegmatis (strain ATCC 700084 / mc(2)155) (Mycobacterium smegmatis).